The following is a 447-amino-acid chain: ATP-dependent protease ATPase subunit HslU (447 aa).

ATP-binding positions include isoleucine 18, 60–65 (GVGKTE), aspartate 260, glutamate 325, and arginine 397.

This sequence belongs to the ClpX chaperone family. HslU subfamily. A double ring-shaped homohexamer of HslV is capped on each side by a ring-shaped HslU homohexamer. The assembly of the HslU/HslV complex is dependent on binding of ATP.

Its subcellular location is the cytoplasm. Its function is as follows. ATPase subunit of a proteasome-like degradation complex; this subunit has chaperone activity. The binding of ATP and its subsequent hydrolysis by HslU are essential for unfolding of protein substrates subsequently hydrolyzed by HslV. HslU recognizes the N-terminal part of its protein substrates and unfolds these before they are guided to HslV for hydrolysis. In Paraburkholderia phymatum (strain DSM 17167 / CIP 108236 / LMG 21445 / STM815) (Burkholderia phymatum), this protein is ATP-dependent protease ATPase subunit HslU.